An 80-amino-acid chain; its full sequence is Acyl carrier protein (80 aa).

Positions 1-79 (MTEEEIFNKI…EAVEYIKSHQ (79 aa)) constitute a Carrier domain. Ser-39 carries the O-(pantetheine 4'-phosphoryl)serine modification.

The protein belongs to the acyl carrier protein (ACP) family. 4'-phosphopantetheine is transferred from CoA to a specific serine of apo-ACP by AcpS. This modification is essential for activity because fatty acids are bound in thioester linkage to the sulfhydryl of the prosthetic group.

The protein localises to the cytoplasm. The protein operates within lipid metabolism; fatty acid biosynthesis. Carrier of the growing fatty acid chain in fatty acid biosynthesis. The chain is Acyl carrier protein from Lactobacillus johnsonii (strain CNCM I-12250 / La1 / NCC 533).